The chain runs to 797 residues: RAS guanyl-releasing protein 1 (797 aa).

Residues 1–12 are compositionally biased toward basic and acidic residues; that stretch reads MGTLGKAREAPR. The interval 1-23 is disordered; it reads MGTLGKAREAPRKPSHGCRAASK. Residues 53–176 enclose the N-terminal Ras-GEF domain; it reads LGHLAKGASL…RLIDTTQINA (124 aa). The segment at 57–110 is ras exchanger motif region; required for transforming activity; it reads AKGASLDDLIDSCIQSFDADGNLCRSNQLLQVMLTMHRIVISSAELLQKVITLY. A Phosphothreonine; by PKC modification is found at Thr-184. In terms of domain architecture, Ras-GEF spans 205–436; it reads EPEELSEHLT…YELSYAREPR (232 aa). EF-hand domains follow at residues 470–505 and 506–532; these read HVQR…FPFS and FCVM…ASSI. Positions 483, 485, 487, 489, and 494 each coordinate Ca(2+). Residues 541 to 591 form a Phorbol-ester/DAG-type zinc finger; it reads PHNFQETTYLKPTFCDNCAGFLWGVIKQGYRCKDCGMNCHKQCKDLVVFEC. Residues 673 to 694 are disordered; the sequence is TQTESQPWIGSEGPSGPFVLSS. A suppress the PT region-mediated translocation to plasma membrane region spans residues 686 to 694; sequence PSGPFVLSS. Residues 718 to 797 form a PT region; mediates the BCR-dependent translocation to plasma membrane region; the sequence is LVRKRAFVKW…LAQMEQGDCS (80 aa). Positions 746–786 form a coiled coil; the sequence is PTYQELEQEINTLKADNDALKIQLKYAQKKIESLQLEKSNH.

The protein belongs to the RASGRP family. Homodimer. Forms a signaling complex with DGKZ and HRAS. Interacts with F-actin. Interacts with SKAP1. As to expression, expressed in brain with higher expression in cerebellum, cerebral cortex and amygdala. Expressed in the hematopoietic system. Expressed in T-cells (at protein level). Expressed in NK cells (at protein level).

The protein resides in the cytoplasm. It is found in the cytosol. The protein localises to the cell membrane. It localises to the golgi apparatus membrane. Its subcellular location is the endoplasmic reticulum membrane. Its activity is regulated as follows. Autoinhibited. Activated by diacylglycerol and calcium binding, which induces a conformational change releasing the autoinhibitory state. Regulated by DGKA. Regulated by DGKZ. Regulated by PLC gamma and F-actin polymerization. Functionally, functions as a calcium- and diacylglycerol (DAG)-regulated nucleotide exchange factor specifically activating Ras through the exchange of bound GDP for GTP. Activates the Erk/MAP kinase cascade. Regulates T-cell/B-cell development, homeostasis and differentiation by coupling T-lymphocyte/B-lymphocyte antigen receptors to Ras. Regulates NK cell cytotoxicity and ITAM-dependent cytokine production by activation of Ras-mediated ERK and JNK pathways. Functions in mast cell degranulation and cytokine secretion, regulating FcERI-evoked allergic responses. May also function in differentiation of other cell types. The chain is RAS guanyl-releasing protein 1 (RASGRP1) from Homo sapiens (Human).